We begin with the raw amino-acid sequence, 714 residues long: Probable metal-nicotianamine transporter YSL5 (714 aa).

Residues 17 to 44 form a disordered region; it reads HELQETGFSPETEKVKNKNFEEDEEEED. Basic and acidic residues predominate over residues 27–36; that stretch reads ETEKVKNKNF. Helical transmembrane passes span 67–87, 90–110, 135–155, 175–195, 236–256, 295–315, 340–360, 413–433, 445–465, 477–497, 531–551, 593–613, and 631–651; these read AFVV…KLNL, GIIP…VKTW, CVVA…LFGM, LGWI…SVVP, VLGK…FFTG, IINI…WPLI, VFIA…KVLS, IPTW…TAIL, ILVI…GAGL, LAIF…LAGL, FVSQ…VFWL, LVLC…KDSL, and FFLG…LFIW.

The protein belongs to the YSL (TC 2.A.67.2) family.

The protein localises to the membrane. Functionally, may be involved in the transport of nicotianamine-chelated metals. This chain is Probable metal-nicotianamine transporter YSL5 (YSL5), found in Arabidopsis thaliana (Mouse-ear cress).